The chain runs to 289 residues: MQQSTLLKPVSCYGIGVHTGKRTQLTIEPAKENTGIIFIRTDISSENNYIEASYYNVSDTLLSTTISNNHKIQVSTIEHLMAALWGCSIDNAVIKIDGPEVPIMDGSSKPFVFMIECAGKKLQNAPKKYLKILKEIKVVNKDCELYCTPSEHITVDLTIDFSSKAIGKQNLNFGVQESFTKNIADARTFGFIKDVEYLKSKGLAQGASFENAIGIDEHDKVLNPSGLRYADEFVRHKLLDLFGDLYTSGISIVSAIKGYKTSHAFNNELLHKIFSDTTSYKFVTSNELS.

Residues H79, H236, and D240 each coordinate Zn(2+). The active-site Proton donor is H263.

It belongs to the LpxC family. Zn(2+) serves as cofactor.

It carries out the reaction a UDP-3-O-[(3R)-3-hydroxyacyl]-N-acetyl-alpha-D-glucosamine + H2O = a UDP-3-O-[(3R)-3-hydroxyacyl]-alpha-D-glucosamine + acetate. The protein operates within glycolipid biosynthesis; lipid IV(A) biosynthesis; lipid IV(A) from (3R)-3-hydroxytetradecanoyl-[acyl-carrier-protein] and UDP-N-acetyl-alpha-D-glucosamine: step 2/6. Functionally, catalyzes the hydrolysis of UDP-3-O-myristoyl-N-acetylglucosamine to form UDP-3-O-myristoylglucosamine and acetate, the committed step in lipid A biosynthesis. This Rickettsia typhi (strain ATCC VR-144 / Wilmington) protein is UDP-3-O-acyl-N-acetylglucosamine deacetylase.